The primary structure comprises 192 residues: Peptidyl-tRNA hydrolase (192 aa).

Tyr-17 provides a ligand contact to tRNA. His-22 functions as the Proton acceptor in the catalytic mechanism. Positions 68, 70, and 116 each coordinate tRNA.

Belongs to the PTH family. Monomer.

It is found in the cytoplasm. The enzyme catalyses an N-acyl-L-alpha-aminoacyl-tRNA + H2O = an N-acyl-L-amino acid + a tRNA + H(+). In terms of biological role, hydrolyzes ribosome-free peptidyl-tRNAs (with 1 or more amino acids incorporated), which drop off the ribosome during protein synthesis, or as a result of ribosome stalling. Its function is as follows. Catalyzes the release of premature peptidyl moieties from peptidyl-tRNA molecules trapped in stalled 50S ribosomal subunits, and thus maintains levels of free tRNAs and 50S ribosomes. The protein is Peptidyl-tRNA hydrolase of Xylella fastidiosa (strain M12).